Reading from the N-terminus, the 258-residue chain is Deoxyribose-phosphate aldolase (258 aa).

Residue aspartate 101 is the Proton donor/acceptor of the active site. The active-site Schiff-base intermediate with acetaldehyde is lysine 166. The Proton donor/acceptor role is filled by lysine 200.

This sequence belongs to the DeoC/FbaB aldolase family. DeoC type 2 subfamily.

The protein localises to the cytoplasm. The catalysed reaction is 2-deoxy-D-ribose 5-phosphate = D-glyceraldehyde 3-phosphate + acetaldehyde. It participates in carbohydrate degradation; 2-deoxy-D-ribose 1-phosphate degradation; D-glyceraldehyde 3-phosphate and acetaldehyde from 2-deoxy-alpha-D-ribose 1-phosphate: step 2/2. Functionally, catalyzes a reversible aldol reaction between acetaldehyde and D-glyceraldehyde 3-phosphate to generate 2-deoxy-D-ribose 5-phosphate. The chain is Deoxyribose-phosphate aldolase from Actinobacillus pleuropneumoniae serotype 3 (strain JL03).